The chain runs to 348 residues: Cyclin-dependent kinase inhibitor 1C (348 aa).

Omega-N-methylarginine is present on R109. Residues 115–348 (VAVIPRSGPP…VEQTPRKRLR (234 aa)) form a disordered region. Composition is skewed to acidic residues over residues 207–220 (QGEE…DELG) and 227–274 (QGEE…QDEN). A compositionally biased stretch (basic and acidic residues) spans 275-284 (QEQRGQELKD). Positions 309 to 312 (KRKR) match the Nuclear localization signal motif.

The protein belongs to the CDI family. As to quaternary structure, interacts with PCNA. In terms of tissue distribution, expressed in the heart, brain, lung, skeletal muscle, kidney, pancreas and testis. High levels are seen in the placenta while low levels are seen in the liver.

Its subcellular location is the nucleus. Its function is as follows. Potent tight-binding inhibitor of several G1 cyclin/CDK complexes (cyclin E-CDK2, cyclin D2-CDK4, and cyclin A-CDK2) and, to lesser extent, of the mitotic cyclin B-CDC2. Negative regulator of cell proliferation. May play a role in maintenance of the non-proliferative state throughout life. The protein is Cyclin-dependent kinase inhibitor 1C (Cdkn1c) of Mus musculus (Mouse).